A 246-amino-acid polypeptide reads, in one-letter code: Alpha-tubulin N-acetyltransferase (246 aa).

The 182-residue stretch at 21-202 (LTLVPDGVSR…NNFVVFHSFF (182 aa)) folds into the N-acetyltransferase domain. Acetyl-CoA is bound by residues 135–148 (FYVDESCQRQGYGK) and 172–181 (SNKLLGFLRK).

This sequence belongs to the acetyltransferase ATAT1 family.

The catalysed reaction is L-lysyl-[alpha-tubulin] + acetyl-CoA = N(6)-acetyl-L-lysyl-[alpha-tubulin] + CoA + H(+). Its function is as follows. Specifically acetylates 'Lys-40' in alpha-tubulin on the lumenal side of microtubules. Promotes microtubule destabilization and accelerates microtubule dynamics; this activity may be independent of acetylation activity. Acetylates alpha-tubulin with a slow enzymatic rate, due to a catalytic site that is not optimized for acetyl transfer. Enters the microtubule through each end and diffuses quickly throughout the lumen of microtubules. Acetylates only long/old microtubules because of its slow acetylation rate since it does not have time to act on dynamically unstable microtubules before the enzyme is released. This Leishmania major protein is Alpha-tubulin N-acetyltransferase.